Here is a 121-residue protein sequence, read N- to C-terminus: uncharacterized protein (121 aa).

The next 2 membrane-spanning stretches (helical) occupy residues 26-46 (FIAL…ILVL) and 72-92 (AFLT…WLGL).

It localises to the membrane. This is an uncharacterized protein from Saccharomyces cerevisiae (strain ATCC 204508 / S288c) (Baker's yeast).